The following is a 100-amino-acid chain: Urease subunit gamma (100 aa).

Belongs to the urease gamma subunit family. As to quaternary structure, heterotrimer of UreA (gamma), UreB (beta) and UreC (alpha) subunits. Three heterotrimers associate to form the active enzyme.

Its subcellular location is the cytoplasm. The catalysed reaction is urea + 2 H2O + H(+) = hydrogencarbonate + 2 NH4(+). Its pathway is nitrogen metabolism; urea degradation; CO(2) and NH(3) from urea (urease route): step 1/1. The sequence is that of Urease subunit gamma from Yersinia bercovieri.